The chain runs to 1328 residues: DNA-directed RNA polymerase subunit beta (1328 aa).

Belongs to the RNA polymerase beta chain family. The RNAP catalytic core consists of 2 alpha, 1 beta, 1 beta' and 1 omega subunit. When a sigma factor is associated with the core the holoenzyme is formed, which can initiate transcription.

The catalysed reaction is RNA(n) + a ribonucleoside 5'-triphosphate = RNA(n+1) + diphosphate. Its function is as follows. DNA-dependent RNA polymerase catalyzes the transcription of DNA into RNA using the four ribonucleoside triphosphates as substrates. This is DNA-directed RNA polymerase subunit beta from Karelsulcia muelleri (strain GWSS) (Sulcia muelleri).